A 151-amino-acid chain; its full sequence is MSTTVKILLLNGPNLNLLGRREPGHYGHQTLATIVSELSTQAQQASVSLEHLQSNAEHELIDAIHATDAQFIIINPAAFTHTSVALRDALLGVAIPFIEVHLSNVHAREPFRQHSYFSDKALGVICGLGAQGYKFALQAALSHLSDKQLQS.

Residue tyrosine 26 is the Proton acceptor of the active site. Asparagine 75, histidine 81, and aspartate 88 together coordinate substrate. Histidine 101 acts as the Proton donor in catalysis. Substrate-binding positions include 102-103 (LS) and arginine 112.

This sequence belongs to the type-II 3-dehydroquinase family. Homododecamer.

It carries out the reaction 3-dehydroquinate = 3-dehydroshikimate + H2O. It functions in the pathway metabolic intermediate biosynthesis; chorismate biosynthesis; chorismate from D-erythrose 4-phosphate and phosphoenolpyruvate: step 3/7. In terms of biological role, catalyzes a trans-dehydration via an enolate intermediate. This Shewanella denitrificans (strain OS217 / ATCC BAA-1090 / DSM 15013) protein is 3-dehydroquinate dehydratase.